The primary structure comprises 327 residues: Protein EMSY-LIKE 1 (327 aa).

In terms of domain architecture, ENT spans 1 to 88 (METQIHQLEQ…HATIQPFDVL (88 aa)). Positions 32–58 (ESLITELRKELRVSDDEHRELLSRVNK) form a coiled coil. Disordered stretches follow at residues 206–257 (GHGS…SDDI) and 305–327 (ADTS…MPQG). The span at 214–232 (GNRRGQIHGGRGRGPRIHQ) shows a compositional bias: basic residues. The stretch at 281-306 (LELDKAKKMLKEHEQALIAAIARLAD) forms a coiled coil. A Phosphoserine modification is found at Ser-308. A compositionally biased stretch (basic and acidic residues) spans 318 to 327 (YSHDHPMPQG).

Isoform 1 interacts with EDM2 in nucleus.

Its subcellular location is the nucleus. In terms of biological role, probably involved in the regulation of chromatin states. Contributes to RPP7-mediated and basal immunity, especially against Hyaloperonospora arabidopsidis isolate Hiks1. Regulates negatively EDM2-dependent floral transition. The polypeptide is Protein EMSY-LIKE 1 (Arabidopsis thaliana (Mouse-ear cress)).